Reading from the N-terminus, the 67-residue chain is Transcription elongation factor Spt4 (67 aa).

Residues Cys7, Cys10, Cys19, and Cys22 each contribute to the Zn(2+) site.

This sequence belongs to the archaeal Spt4 family. In terms of assembly, heterodimer composed of Spt4 and Spt5. Interacts with RNA polymerase (RNAP). The complex interacts with FttA.

Its subcellular location is the chromosome. Its function is as follows. The Stp4-Spt5 complex stimulates transcription elongation on both naked DNA and histone-bound DNA (chromatin), facilitating transcription through the histone barrier. Neither protein functions alone. The complex also stimulates the transcription termination activity of FttA, neither protein alone stimulates FttA-dependent termination. The polypeptide is Transcription elongation factor Spt4 (Thermococcus kodakarensis (strain ATCC BAA-918 / JCM 12380 / KOD1) (Pyrococcus kodakaraensis (strain KOD1))).